Consider the following 148-residue polypeptide: NADPH-dependent 7-cyano-7-deazaguanine reductase (148 aa).

The active-site Thioimide intermediate is the C50. D57 (proton donor) is an active-site residue. Residues V72 to S74 and H91 to E92 each bind substrate.

The protein belongs to the GTP cyclohydrolase I family. QueF type 1 subfamily.

It is found in the cytoplasm. It carries out the reaction 7-aminomethyl-7-carbaguanine + 2 NADP(+) = 7-cyano-7-deazaguanine + 2 NADPH + 3 H(+). Its pathway is tRNA modification; tRNA-queuosine biosynthesis. Catalyzes the NADPH-dependent reduction of 7-cyano-7-deazaguanine (preQ0) to 7-aminomethyl-7-deazaguanine (preQ1). This Helicobacter pylori (strain J99 / ATCC 700824) (Campylobacter pylori J99) protein is NADPH-dependent 7-cyano-7-deazaguanine reductase.